The primary structure comprises 387 residues: Ferrochelatase (387 aa).

Fe cation is bound by residues His196 and Glu277.

Belongs to the ferrochelatase family.

Its subcellular location is the cytoplasm. The enzyme catalyses heme b + 2 H(+) = protoporphyrin IX + Fe(2+). Its pathway is porphyrin-containing compound metabolism; protoheme biosynthesis; protoheme from protoporphyrin-IX: step 1/1. Its function is as follows. Catalyzes the ferrous insertion into protoporphyrin IX. The sequence is that of Ferrochelatase from Trichodesmium erythraeum (strain IMS101).